Here is a 433-residue protein sequence, read N- to C-terminus: MKKYDRGWASLETGAALLIVMLLIAWGAGIWQDYIQTKGWQTEARLVSNWTSAARSYIGKNYTTLQGSSTTTTPAVITTTMLKNTGFLSSGFTETNSEGQRLQAYVVRNAQNPELLQAMVVSSGGTPYPVKALIQMAKDITTGLGGYIQDGKTATGALRSWSVALSNYGAKSGNGHIAVLLSTDELSGAAEDTDRLYRFQVNGRPDLNKMHTAIDMGSNNLNNVGAVNAQTGNFSGNVNGVNGTFSGQVKGNSGNFDVNVTAGGDIRSNNGWLITRNSKGWLNETHGGGFYMSDGSWVRSVNNKGIYTGGQVKGGTVRADGRLYTGEYLQLERTAVAGASCSPNGLVGRDNTGAILSCQSGRWSGGNKINYSACNWYKSSVAMNHFIGGKSGGSIYYKPIQCPTGYIMTGTRMYGIGDGVDEEHVDAYCCPFN.

Residues 1–361 (MKKYDRGWAS…TGAILSCQSG (361 aa)) form a constant region region. Positions 362–433 (RWSGGNKINY…HVDAYCCPFN (72 aa)) are variable region.

The sequence is that of Shufflon protein C' from Escherichia coli.